Consider the following 453-residue polypeptide: Bifunctional protein GlmU (453 aa).

The tract at residues 1–226 is pyrophosphorylase; that stretch reads MSLNVVILAA…AMEVEGANNR (226 aa). UDP-N-acetyl-alpha-D-glucosamine-binding positions include 8–11, K22, Q73, 78–79, 100–102, G137, E151, N166, and N224; these read LAAG, GT, and YGD. D102 serves as a coordination point for Mg(2+). N224 lines the Mg(2+) pocket. Positions 227–247 are linker; that stretch reads VQLAQLERSYQKMQAERLMIA. The segment at 248–453 is N-acetyltransferase; the sequence is GATLIDPARF…QNWARPVKKK (206 aa). UDP-N-acetyl-alpha-D-glucosamine-binding residues include R330 and K348. The Proton acceptor role is filled by H360. UDP-N-acetyl-alpha-D-glucosamine contacts are provided by Y363 and N374. Acetyl-CoA is bound by residues A377, 383 to 384, S402, A420, and R437; that span reads NY.

It in the N-terminal section; belongs to the N-acetylglucosamine-1-phosphate uridyltransferase family. The protein in the C-terminal section; belongs to the transferase hexapeptide repeat family. Homotrimer. Mg(2+) serves as cofactor.

The protein resides in the cytoplasm. The catalysed reaction is alpha-D-glucosamine 1-phosphate + acetyl-CoA = N-acetyl-alpha-D-glucosamine 1-phosphate + CoA + H(+). It catalyses the reaction N-acetyl-alpha-D-glucosamine 1-phosphate + UTP + H(+) = UDP-N-acetyl-alpha-D-glucosamine + diphosphate. The protein operates within nucleotide-sugar biosynthesis; UDP-N-acetyl-alpha-D-glucosamine biosynthesis; N-acetyl-alpha-D-glucosamine 1-phosphate from alpha-D-glucosamine 6-phosphate (route II): step 2/2. It functions in the pathway nucleotide-sugar biosynthesis; UDP-N-acetyl-alpha-D-glucosamine biosynthesis; UDP-N-acetyl-alpha-D-glucosamine from N-acetyl-alpha-D-glucosamine 1-phosphate: step 1/1. It participates in bacterial outer membrane biogenesis; LPS lipid A biosynthesis. Catalyzes the last two sequential reactions in the de novo biosynthetic pathway for UDP-N-acetylglucosamine (UDP-GlcNAc). The C-terminal domain catalyzes the transfer of acetyl group from acetyl coenzyme A to glucosamine-1-phosphate (GlcN-1-P) to produce N-acetylglucosamine-1-phosphate (GlcNAc-1-P), which is converted into UDP-GlcNAc by the transfer of uridine 5-monophosphate (from uridine 5-triphosphate), a reaction catalyzed by the N-terminal domain. This chain is Bifunctional protein GlmU, found in Aeromonas hydrophila subsp. hydrophila (strain ATCC 7966 / DSM 30187 / BCRC 13018 / CCUG 14551 / JCM 1027 / KCTC 2358 / NCIMB 9240 / NCTC 8049).